A 67-amino-acid chain; its full sequence is MRSKHNELKSPIMSCSKRMEWKSILSPLIFRQQMILTQNLNQKLKTIKVCMHRIQKLSKLKALYRGL.

It belongs to the rhabdoviruses C protein family.

In terms of biological role, seems to stimulates transcription by the viral polymerase. May play a role in viral pathogenesis or transmission by insects vectors. The chain is Protein C' (P) from Vesicular stomatitis Indiana virus (strain San Juan) (VSIV).